An 82-amino-acid polypeptide reads, in one-letter code: Small ribosomal subunit protein bS20 (82 aa).

It belongs to the bacterial ribosomal protein bS20 family.

Binds directly to 16S ribosomal RNA. This chain is Small ribosomal subunit protein bS20, found in Streptococcus pyogenes serotype M12 (strain MGAS2096).